Consider the following 198-residue polypeptide: Sorcin (198 aa).

EF-hand domains lie at 45-64, 70-98, 100-135, and 151-169; these read QDGQIDADELQRCLTQSGIA, FNLETCRLMVSMLDRDMSGTMGFNEFKEL, AVLNGWRQHFISFDSDRSGTVDPQELQKALTTMGFR, and SGKITFDDYIACCVKLRAL. Positions 83, 85, 87, 89, 94, 113, 115, 117, 119, and 124 each coordinate Ca(2+). Residue serine 178 is modified to Phosphoserine.

As to quaternary structure, homodimer. Interacts with GCA, RYR2 and ANXA7. Detected in cardiac myocytes.

The protein resides in the cytoplasm. Its subcellular location is the sarcoplasmic reticulum membrane. In terms of biological role, calcium-binding protein that modulates excitation-contraction coupling in the heart. Contributes to calcium homeostasis in the heart sarcoplasmic reticulum. Modulates the activity of RYR2 calcium channels. The sequence is that of Sorcin (Sri) from Mus musculus (Mouse).